Consider the following 206-residue polypeptide: Small ribosomal subunit protein uS4 (206 aa).

The 62-residue stretch at 96–157 (RRLDNVVYRM…KAKKQVRIQD (62 aa)) folds into the S4 RNA-binding domain.

The protein belongs to the universal ribosomal protein uS4 family. Part of the 30S ribosomal subunit. Contacts protein S5. The interaction surface between S4 and S5 is involved in control of translational fidelity.

Functionally, one of the primary rRNA binding proteins, it binds directly to 16S rRNA where it nucleates assembly of the body of the 30S subunit. With S5 and S12 plays an important role in translational accuracy. The sequence is that of Small ribosomal subunit protein uS4 from Thioalkalivibrio sulfidiphilus (strain HL-EbGR7).